Here is a 447-residue protein sequence, read N- to C-terminus: MIKIYDTMTRSLQDFIPLNEGKVNMYVCGPTVYNYIHIGNARSVVAFDTIRRYFEYCGYQVNYISNFTDVDDKIIKGAAEAGMDTKSFSDKFISAFMEDVAALGVKPATKNPRVIDYMDEIIDFVKVLVDKEFAYEANGDVYFRVSKSHHYAKLANKTLEDLEIGASGRVDGEGEIKENPLDFALWKSAKSGEVSWESPWGKGRPGWHIECSVMATEILGDTIDIHGGGADLEFPHHTNEIAQSEAKTGKTFANYWMHNGFVNVDNEKMSKSLGNFITVHDMLKSVDGQVIRFFLATQQYRKPVNFTEKAVHDAEVNLKYLKNTFNLPIQENANDEELEQFVKAFQEAMDDDFNTANGITVIFEMAKWINSGHYTSKVKETLAELLEIFGIVFQEEVLDADIESLIEQRQEARANRDFATADRIRDELAKQGIKLLDTKDGVRWTRD.

Position 28 (Cys28) interacts with Zn(2+). The 'HIGH' region motif lies at 30-40 (PTVYNYIHIGN). Zn(2+) is bound by residues Cys211, His236, and Glu240. Residues 268-272 (KMSKS) carry the 'KMSKS' region motif. Lys271 is a binding site for ATP.

This sequence belongs to the class-I aminoacyl-tRNA synthetase family. In terms of assembly, monomer. Requires Zn(2+) as cofactor.

The protein resides in the cytoplasm. The enzyme catalyses tRNA(Cys) + L-cysteine + ATP = L-cysteinyl-tRNA(Cys) + AMP + diphosphate. This is Cysteine--tRNA ligase from Streptococcus agalactiae serotype III (strain NEM316).